A 1044-amino-acid chain; its full sequence is Unconventional myosin-Ic (1044 aa).

The Myosin motor domain maps to 28–712; that stretch reads GVQDFVLLEN…TLFATEDSLE (685 aa). Residues asparagine 69, tyrosine 77, 120–129, and 173–177 contribute to the ATP site; these read SGESGAGKTE and NDNSS. At lysine 364 the chain carries N6-methyllysine. Serine 389 carries the post-translational modification Phosphoserine. N6-acetyllysine is present on lysine 467. Serine 517 carries the post-translational modification Phosphoserine. The interval 589–611 is actin-binding; sequence LLQLVEILRSKEPAYIRCIKPND. 2 IQ domains span residues 715–744 and 738–767; these read RQSL…SAIC and VKRS…AAQT. 2 positions are modified to phosphoserine: serine 845 and serine 1022. Residues 866 to 1040 enclose the TH1 domain; that stretch reads KDNYPQSVPR…NGHLAVVAPR (175 aa).

Belongs to the TRAFAC class myosin-kinesin ATPase superfamily. Myosin family. In terms of assembly, interacts (via its IQ motifs) with CABP1 and CIB1; the interaction with CABP1 and CIB1 is calcium-dependent. Interacts (via tail domain) with PLEKHB1 (via PH domain); the interaction is not affected by the presence or absence of calcium and CALM. Interacts with POLR1A. Interacts with POLR2A. Component of the B-WICH complex, at least composed of SMARCA5/SNF2H, BAZ1B/WSTF, SF3B1, DEK, MYO1C, ERCC6, MYBBP1A and DDX21. Interacts (via its IQ motifs) with CALM; this precludes interaction with YWHAB. Interacts with YWHAB; this precludes interaction with CALM. Interacts with RPS6. Interacts with actin. Interacts with LLPH. Interacts with GLUT4. Interacts (via its IQ motifs) with SH3BGRL3; the interaction is dependent on calcium and takes place at membrane ruffles.

It localises to the cytoplasm. The protein localises to the nucleus. Its subcellular location is the cell cortex. It is found in the cell projection. The protein resides in the stereocilium membrane. It localises to the cytoplasmic vesicle. The protein localises to the ruffle membrane. Its function is as follows. Myosins are actin-based motor molecules with ATPase activity. Unconventional myosins serve in intracellular movements. Their highly divergent tails are presumed to bind to membranous compartments, which would be moved relative to actin filaments. Involved in glucose transporter recycling in response to insulin by regulating movement of intracellular GLUT4-containing vesicles to the plasma membrane. Component of the hair cell's (the sensory cells of the inner ear) adaptation-motor complex. Acts as a mediator of adaptation of mechanoelectrical transduction in stereocilia of vestibular hair cells. Binds phosphoinositides and links the actin cytoskeleton to cellular membranes. The sequence is that of Unconventional myosin-Ic (Myo1c) from Rattus norvegicus (Rat).